The following is a 372-amino-acid chain: DNA replication and repair protein RecF (372 aa).

ATP is bound at residue 30–37 (GENGQGKT).

The protein belongs to the RecF family.

It localises to the cytoplasm. Its function is as follows. The RecF protein is involved in DNA metabolism; it is required for DNA replication and normal SOS inducibility. RecF binds preferentially to single-stranded, linear DNA. It also seems to bind ATP. This Anaeromyxobacter dehalogenans (strain 2CP-C) protein is DNA replication and repair protein RecF.